The sequence spans 145 residues: 3-dehydroquinate dehydratase (145 aa).

Y24 (proton acceptor) is an active-site residue. The substrate site is built by N75, H81, and D88. H101 serves as the catalytic Proton donor. Residues 102–103 (IS) and R112 contribute to the substrate site.

The protein belongs to the type-II 3-dehydroquinase family. In terms of assembly, homododecamer.

The catalysed reaction is 3-dehydroquinate = 3-dehydroshikimate + H2O. It participates in metabolic intermediate biosynthesis; chorismate biosynthesis; chorismate from D-erythrose 4-phosphate and phosphoenolpyruvate: step 3/7. In terms of biological role, catalyzes a trans-dehydration via an enolate intermediate. The sequence is that of 3-dehydroquinate dehydratase (aroQ) from Corynebacterium glutamicum (strain ATCC 13032 / DSM 20300 / JCM 1318 / BCRC 11384 / CCUG 27702 / LMG 3730 / NBRC 12168 / NCIMB 10025 / NRRL B-2784 / 534).